The sequence spans 240 residues: Transcriptional regulatory protein ChvI (240 aa).

The 114-residue stretch at T3 to L116 folds into the Response regulatory domain. 3 residues coordinate Mg(2+): D8, D9, and D52. D52 bears the 4-aspartylphosphate mark. A DNA-binding region (ompR/PhoB-type) is located at residues S139–E238.

Mg(2+) is required as a cofactor. Post-translationally, phosphorylated by ChvG.

Its subcellular location is the cytoplasm. It functions in the pathway glycan metabolism; exopolysaccharide biosynthesis. Member of a two-component regulatory system ChvG(ExoS)/ChvI involved in regulating the production of succinoglycan. This Rhizobium meliloti (strain 1021) (Ensifer meliloti) protein is Transcriptional regulatory protein ChvI (chvI).